The chain runs to 147 residues: Prefoldin subunit alpha (147 aa).

This sequence belongs to the prefoldin alpha subunit family. Heterohexamer of two alpha and four beta subunits.

It localises to the cytoplasm. Its function is as follows. Molecular chaperone capable of stabilizing a range of proteins. Seems to fulfill an ATP-independent, HSP70-like function in archaeal de novo protein folding. The sequence is that of Prefoldin subunit alpha from Saccharolobus islandicus (strain M.16.27) (Sulfolobus islandicus).